A 412-amino-acid chain; its full sequence is Serine hydroxymethyltransferase (412 aa).

(6S)-5,6,7,8-tetrahydrofolate-binding positions include Leu117 and 121 to 123 (GHL). Lys226 is modified (N6-(pyridoxal phosphate)lysine).

The protein belongs to the SHMT family. Homodimer. Pyridoxal 5'-phosphate is required as a cofactor.

It localises to the cytoplasm. The catalysed reaction is (6R)-5,10-methylene-5,6,7,8-tetrahydrofolate + glycine + H2O = (6S)-5,6,7,8-tetrahydrofolate + L-serine. Its pathway is one-carbon metabolism; tetrahydrofolate interconversion. The protein operates within amino-acid biosynthesis; glycine biosynthesis; glycine from L-serine: step 1/1. Its function is as follows. Catalyzes the reversible interconversion of serine and glycine with tetrahydrofolate (THF) serving as the one-carbon carrier. This reaction serves as the major source of one-carbon groups required for the biosynthesis of purines, thymidylate, methionine, and other important biomolecules. Also exhibits THF-independent aldolase activity toward beta-hydroxyamino acids, producing glycine and aldehydes, via a retro-aldol mechanism. In Symbiobacterium thermophilum (strain DSM 24528 / JCM 14929 / IAM 14863 / T), this protein is Serine hydroxymethyltransferase.